A 100-amino-acid chain; its full sequence is Urease subunit gamma (100 aa).

The protein belongs to the urease gamma subunit family. In terms of assembly, heterotrimer of UreA (gamma), UreB (beta) and UreC (alpha) subunits. Three heterotrimers associate to form the active enzyme.

It localises to the cytoplasm. The enzyme catalyses urea + 2 H2O + H(+) = hydrogencarbonate + 2 NH4(+). Its pathway is nitrogen metabolism; urea degradation; CO(2) and NH(3) from urea (urease route): step 1/1. The protein is Urease subunit gamma of Rhizobium etli (strain ATCC 51251 / DSM 11541 / JCM 21823 / NBRC 15573 / CFN 42).